The chain runs to 61 residues: Large ribosomal subunit protein uL30 (61 aa).

A disordered region spans residues Met-1–Glu-20.

It belongs to the universal ribosomal protein uL30 family. Part of the 50S ribosomal subunit.

This Hyphomonas neptunium (strain ATCC 15444) protein is Large ribosomal subunit protein uL30.